A 140-amino-acid chain; its full sequence is Nucleoside diphosphate kinase (140 aa).

Residues lysine 11, phenylalanine 59, arginine 87, threonine 93, arginine 104, and asparagine 114 each coordinate ATP. Histidine 117 functions as the Pros-phosphohistidine intermediate in the catalytic mechanism.

This sequence belongs to the NDK family. Homotetramer. Requires Mg(2+) as cofactor.

It localises to the cytoplasm. It carries out the reaction a 2'-deoxyribonucleoside 5'-diphosphate + ATP = a 2'-deoxyribonucleoside 5'-triphosphate + ADP. The enzyme catalyses a ribonucleoside 5'-diphosphate + ATP = a ribonucleoside 5'-triphosphate + ADP. Its function is as follows. Major role in the synthesis of nucleoside triphosphates other than ATP. The ATP gamma phosphate is transferred to the NDP beta phosphate via a ping-pong mechanism, using a phosphorylated active-site intermediate. The polypeptide is Nucleoside diphosphate kinase (Agrobacterium fabrum (strain C58 / ATCC 33970) (Agrobacterium tumefaciens (strain C58))).